Here is a 216-residue protein sequence, read N- to C-terminus: Endoplasmic reticulum vesicle protein 25 (216 aa).

The signal sequence occupies residues 1–20 (MASLKSLLSGFLLLAGAAQA). Over 21–185 (LKFDLEATSS…TNESTNNRVK (165 aa)) the chain is Lumenal. Positions 36 to 126 (RRCIRNFVNK…RRHVELDIDI (91 aa)) constitute a GOLD domain. Residues 186–206 (WFGMATTFLLIALWGWQIMYL) traverse the membrane as a helical segment. The Cytoplasmic segment spans residues 207-216 (RAYFRSKHLI).

This sequence belongs to the EMP24/GP25L family.

It is found in the endoplasmic reticulum membrane. It localises to the golgi apparatus membrane. Functionally, constituent of COPII-coated endoplasmic reticulum-derived transport vesicles. Required for efficient transport of a subset of secretory proteins to the Golgi. Facilitates retrograde transport from the Golgi to the endoplasmic reticulum. This is Endoplasmic reticulum vesicle protein 25 (erv-1) from Neurospora crassa (strain ATCC 24698 / 74-OR23-1A / CBS 708.71 / DSM 1257 / FGSC 987).